The chain runs to 933 residues: Protein inturned (933 aa).

A disordered region spans residues 1–54; sequence MASLPLCGSVRSPEGLPGDPSSQEDRQDYDPEDPVSGSGSYSPTSTDSNDLEPE. A compositionally biased stretch (polar residues) spans 37 to 48; that stretch reads GSGSYSPTSTDS. One can recognise a PDZ domain in the interval 186-264; sequence LVGIIHQTKW…PMQVKLTFEN (79 aa). Ser675 bears the Phosphoserine mark. The tract at residues 703–742 is disordered; the sequence is LKTRKPSPSRSGGPDSGLEGEGVGLSPHTTESQGSHGSEE. Positions 710–719 are enriched in low complexity; sequence PSRSGGPDSG. Over residues 729 to 738 the composition is skewed to polar residues; the sequence is PHTTESQGSH.

Belongs to the inturned family. As to quaternary structure, component of the CPLANE (ciliogenesis and planar polarity effectors) complex, composed of INTU, FUZ and WDPCP. Interacts with CPLANE1. Interacts with NPHP4 and DAAM1; INTU is mediating the interaction between NPHP4 and DAAM1.

It localises to the cytoplasm. It is found in the cell surface. The protein localises to the cytoskeleton. The protein resides in the cilium basal body. Its subcellular location is the microtubule organizing center. It localises to the centrosome. It is found in the centriole. Functionally, plays a key role in ciliogenesis and embryonic development. Regulator of cilia formation by controlling the organization of the apical actin cytoskeleton and the positioning of the basal bodies at the apical cell surface, which in turn is essential for the normal orientation of elongating ciliary microtubules. Plays a key role in definition of cell polarity via its role in ciliogenesis but not via conversion extension. Has an indirect effect on hedgehog signaling. Proposed to function as core component of the CPLANE (ciliogenesis and planar polarity effectors) complex involved in the recruitment of peripheral IFT-A proteins to basal bodies. Required for recruitment of CPLANE2 to the mother centriole. Binds phosphatidylinositol 3-phosphate with highest affinity, followed by phosphatidylinositol 4-phosphate and phosphatidylinositol 5-phosphate. This chain is Protein inturned (INTU), found in Bos taurus (Bovine).